The sequence spans 959 residues: Protovillin (959 aa).

A tail region spans residues 1–53 (MEPPLELPTQRKRVIPSKFGILKRNAEIEAEKNRENLQQSSCFSHINEIGKEI). Residues 54–832 (GLEIWKIIDD…PIMLPTSGVT (779 aa)) are core. 6 Gelsolin-like repeats span residues 64 to 116 (STIQ…SQET), 204 to 244 (IRVK…LEKG), 309 to 366 (IKLY…DQRT), 479 to 529 (RNKF…EDKG), 603 to 647 (INIH…KEAA), and 713 to 754 (FKVF…TEKL). A run of 2 repeats spans residues 840 to 849 (TPKPITTPTV) and 851 to 860 (TPKPITTPTV). The tract at residues 840-860 (TPKPITTPTVTTPKPITTPTV) is 2 X 10 AA repeats of T-P-K-P-I-T-T-P-T-V. In terms of domain architecture, HP spans 895 to 959 (TTITTFYPLS…KQLRVDNGLF (65 aa)).

This sequence belongs to the villin/gelsolin family.

It is found in the cytoplasm. The protein resides in the cytoskeleton. Caps actin filaments but displays neither severing nor cross-linking nor nucleating activities. Protovillin seems to be a villin precursor with only archaic capping activity. It lacks essential changes in the sequence to allow bundling of actin filaments and consequently the appearance of microvilli. The sequence is that of Protovillin (vilB) from Dictyostelium discoideum (Social amoeba).